The sequence spans 360 residues: Mannose-1-phosphate guanylyltransferase catalytic subunit beta (360 aa).

Residues 2-222 (KALILVGGYG…QGFWMDIGQP (221 aa)) are substrate-binding domain. Position 110 (Asp-110) interacts with GDP-alpha-D-mannose. Residue Asp-110 participates in Mg(2+) binding. Lys-162 is a catalytic residue. Residue Asp-218 coordinates GDP-alpha-D-mannose. Residue Asp-218 coordinates Mg(2+). Positions 245–360 (CSGPGIVGNV…ESVPEPGIIM (116 aa)) are hexapeptide repeat domain.

The protein belongs to the transferase hexapeptide repeat family. Component of the GMPPA-GMPPB mannose-1-phosphate guanylyltransferase complex composed of 4 GMPPA subunits and 8 GMPPB subunits; the complex is organized into three layers, a central layer made up of 2 GMPPA dimers sandwiched between two layers each made up of 2 GMPPB dimers. GMPPB catalytic activity is reduced when part of the complex and binding of GDP-alpha-D-Mannose by GMPPA induces allosteric feedback inhibition of GMPPB. The cofactor is Mg(2+). As to expression, expressed in the liver (at protein level).

It localises to the cytoplasm. The enzyme catalyses alpha-D-mannose 1-phosphate + GTP + H(+) = GDP-alpha-D-mannose + diphosphate. It functions in the pathway nucleotide-sugar biosynthesis; GDP-alpha-D-mannose biosynthesis; GDP-alpha-D-mannose from alpha-D-mannose 1-phosphate (GTP route): step 1/1. Enzyme activity is reduced by incorporation into the GMPPA-GMPPB mannose-1-phosphate guanylyltransferase complex. Allosterically inhibited, when part of the GMPPA-GMPPB complex, by GDP-alpha-D-mannose binding to GMPPA. In terms of biological role, catalytic subunit of the GMPPA-GMPPB mannose-1-phosphate guanylyltransferase complex. Catalyzes the formation of GDP-mannose, an essential precursor of glycan moieties of glycoproteins and glycolipids. Can catalyze the reverse reaction in vitro. Together with GMPPA regulates GDP-alpha-D-mannose levels. The protein is Mannose-1-phosphate guanylyltransferase catalytic subunit beta of Sus scrofa (Pig).